The chain runs to 664 residues: DNA mismatch repair protein MutL (664 aa).

The interval 382 to 447 is disordered; the sequence is RKAGQEQQLQ…YGEPAPSKQQ (66 aa). Over residues 427–436 the composition is skewed to polar residues; the sequence is RHTTSSNQSE.

Belongs to the DNA mismatch repair MutL/HexB family.

Functionally, this protein is involved in the repair of mismatches in DNA. It is required for dam-dependent methyl-directed DNA mismatch repair. May act as a 'molecular matchmaker', a protein that promotes the formation of a stable complex between two or more DNA-binding proteins in an ATP-dependent manner without itself being part of a final effector complex. The sequence is that of DNA mismatch repair protein MutL from Vibrio vulnificus (strain YJ016).